The primary structure comprises 351 residues: MLILGIETSCDETGVALFDAQRGLLAHALYSQIGMHADYGGVVPELASRDHVRKLLPLCDEVLAQAGKARSDIEGIAYTAGPGLVGALMVGGSVAHALGFALGIPVLGVHHMEGHLLAPMLEDNPPAFPFVALLVSGGHTQLVRVDGIGEYQMLGESVDDAAGEAFDKTAKMLGLDYPGGPRVAALAEKGREGQYRFPRPMTDRPGLDFSFSGLKTFTLNTVNDAKDKGTLDEQVKADIALAFEAAVVDTLVIKCRRALEQTGCKRLVIAGGVSANKRLRASLEAMAEKLRGSVFYARPEFCTDNGAMIAYAGAQRLKAGQQDGERIVAVPRWPMNTLPPVAEPRQNGLVD.

H111 and H115 together coordinate Fe cation. Residues 134–138 (LVSGG), D167, G180, and N276 contribute to the substrate site. D304 is a Fe cation binding site.

This sequence belongs to the KAE1 / TsaD family. Fe(2+) serves as cofactor.

It is found in the cytoplasm. The catalysed reaction is L-threonylcarbamoyladenylate + adenosine(37) in tRNA = N(6)-L-threonylcarbamoyladenosine(37) in tRNA + AMP + H(+). Functionally, required for the formation of a threonylcarbamoyl group on adenosine at position 37 (t(6)A37) in tRNAs that read codons beginning with adenine. Is involved in the transfer of the threonylcarbamoyl moiety of threonylcarbamoyl-AMP (TC-AMP) to the N6 group of A37, together with TsaE and TsaB. TsaD likely plays a direct catalytic role in this reaction. In Marinobacter nauticus (strain ATCC 700491 / DSM 11845 / VT8) (Marinobacter aquaeolei), this protein is tRNA N6-adenosine threonylcarbamoyltransferase.